The primary structure comprises 103 residues: Large ribosomal subunit protein uL24 (103 aa).

This sequence belongs to the universal ribosomal protein uL24 family. Part of the 50S ribosomal subunit.

In terms of biological role, one of two assembly initiator proteins, it binds directly to the 5'-end of the 23S rRNA, where it nucleates assembly of the 50S subunit. Functionally, one of the proteins that surrounds the polypeptide exit tunnel on the outside of the subunit. The polypeptide is Large ribosomal subunit protein uL24 (Geobacillus stearothermophilus (Bacillus stearothermophilus)).